The following is a 1370-amino-acid chain: DNA-directed RNA polymerase subunit beta (1370 aa).

Belongs to the RNA polymerase beta chain family. The RNAP catalytic core consists of 2 alpha, 1 beta, 1 beta' and 1 omega subunit. When a sigma factor is associated with the core the holoenzyme is formed, which can initiate transcription.

It carries out the reaction RNA(n) + a ribonucleoside 5'-triphosphate = RNA(n+1) + diphosphate. In terms of biological role, DNA-dependent RNA polymerase catalyzes the transcription of DNA into RNA using the four ribonucleoside triphosphates as substrates. The polypeptide is DNA-directed RNA polymerase subunit beta (Bordetella pertussis (strain Tohama I / ATCC BAA-589 / NCTC 13251)).